A 261-amino-acid polypeptide reads, in one-letter code: MTHQTHAYHTVNPSPWPLTGALSALLMTSGLIMWFHFNSPLLLVLGLTTNFLTMYQWWRDIIRESTFQGHHTTIVQKGLRYGMILFIVSEVFFFAGFFWAFYHSSLAPTPELGGCWPPTGINPLNPLEVPLLNTSVLLASGVSITWAHHSLMEGHRKHMLQALFITIALGVYFTLLQASEYYEAPFTISDGIYGSTFFVATGFHGLHVIIGSSFLIVCFMRQLKFHFTSSHHFGFEAAAWYWHFVDVVWLFLYVSIYWWGS.

Over 1 to 15 (MTHQTHAYHTVNPSP) the chain is Mitochondrial matrix. Residues 16 to 34 (WPLTGALSALLMTSGLIMW) traverse the membrane as a helical segment. The Mitochondrial intermembrane segment spans residues 35-40 (FHFNSP). The chain crosses the membrane as a helical span at residues 41-66 (LLLVLGLTTNFLTMYQWWRDIIREST). Residues 67-72 (FQGHHT) lie on the Mitochondrial matrix side of the membrane. A helical membrane pass occupies residues 73 to 105 (TIVQKGLRYGMILFIVSEVFFFAGFFWAFYHSS). Residues 106–128 (LAPTPELGGCWPPTGINPLNPLE) are Mitochondrial intermembrane-facing. A helical transmembrane segment spans residues 129 to 152 (VPLLNTSVLLASGVSITWAHHSLM). The Mitochondrial matrix segment spans residues 153 to 155 (EGH). A helical transmembrane segment spans residues 156–183 (RKHMLQALFITIALGVYFTLLQASEYYE). The Mitochondrial intermembrane portion of the chain corresponds to 184-190 (APFTISD). Residues 191-223 (GIYGSTFFVATGFHGLHVIIGSSFLIVCFMRQL) traverse the membrane as a helical segment. Over 224–232 (KFHFTSSHH) the chain is Mitochondrial matrix. Residues 233-256 (FGFEAAAWYWHFVDVVWLFLYVSI) form a helical membrane-spanning segment. Over 257 to 261 (YWWGS) the chain is Mitochondrial intermembrane.

The protein belongs to the cytochrome c oxidase subunit 3 family. Component of the cytochrome c oxidase (complex IV, CIV), a multisubunit enzyme composed of 14 subunits. The complex is composed of a catalytic core of 3 subunits MT-CO1, MT-CO2 and MT-CO3, encoded in the mitochondrial DNA, and 11 supernumerary subunits COX4I, COX5A, COX5B, COX6A, COX6B, COX6C, COX7A, COX7B, COX7C, COX8 and NDUFA4, which are encoded in the nuclear genome. The complex exists as a monomer or a dimer and forms supercomplexes (SCs) in the inner mitochondrial membrane with NADH-ubiquinone oxidoreductase (complex I, CI) and ubiquinol-cytochrome c oxidoreductase (cytochrome b-c1 complex, complex III, CIII), resulting in different assemblies (supercomplex SCI(1)III(2)IV(1) and megacomplex MCI(2)III(2)IV(2)).

It localises to the mitochondrion inner membrane. The catalysed reaction is 4 Fe(II)-[cytochrome c] + O2 + 8 H(+)(in) = 4 Fe(III)-[cytochrome c] + 2 H2O + 4 H(+)(out). Functionally, component of the cytochrome c oxidase, the last enzyme in the mitochondrial electron transport chain which drives oxidative phosphorylation. The respiratory chain contains 3 multisubunit complexes succinate dehydrogenase (complex II, CII), ubiquinol-cytochrome c oxidoreductase (cytochrome b-c1 complex, complex III, CIII) and cytochrome c oxidase (complex IV, CIV), that cooperate to transfer electrons derived from NADH and succinate to molecular oxygen, creating an electrochemical gradient over the inner membrane that drives transmembrane transport and the ATP synthase. Cytochrome c oxidase is the component of the respiratory chain that catalyzes the reduction of oxygen to water. Electrons originating from reduced cytochrome c in the intermembrane space (IMS) are transferred via the dinuclear copper A center (CU(A)) of subunit 2 and heme A of subunit 1 to the active site in subunit 1, a binuclear center (BNC) formed by heme A3 and copper B (CU(B)). The BNC reduces molecular oxygen to 2 water molecules using 4 electrons from cytochrome c in the IMS and 4 protons from the mitochondrial matrix. This Dasypus novemcinctus (Nine-banded armadillo) protein is Cytochrome c oxidase subunit 3 (MT-CO3).